The following is a 131-amino-acid chain: Ribonuclease P protein component (131 aa).

This sequence belongs to the RnpA family. Consists of a catalytic RNA component (M1 or rnpB) and a protein subunit.

It catalyses the reaction Endonucleolytic cleavage of RNA, removing 5'-extranucleotides from tRNA precursor.. RNaseP catalyzes the removal of the 5'-leader sequence from pre-tRNA to produce the mature 5'-terminus. It can also cleave other RNA substrates such as 4.5S RNA. The protein component plays an auxiliary but essential role in vivo by binding to the 5'-leader sequence and broadening the substrate specificity of the ribozyme. This chain is Ribonuclease P protein component, found in Synechococcus sp. (strain WH7803).